The chain runs to 177 residues: Late embryogenesis abundant protein 1 (177 aa).

The segment at M1–H177 is disordered. Over residues I28–A39 the composition is skewed to basic and acidic residues. Low complexity predominate over residues Q40–A89. 4 repeat units span residues T53–Q63, T64–Q74, T75–Q85, and T86–Q96. The interval T53–Q96 is 4 X 11 AA approximate tandem repeats of T-A-Q-A-A-K-E-K-T-Q-Q. Over residues A90 to S117 the composition is skewed to basic and acidic residues. The span at M119–G142 shows a compositional bias: polar residues. The segment covering N164–H177 has biased composition (basic and acidic residues).

The protein belongs to the LEA type 4 family. Highest expression is found in seeds. No expression detected in adult tissues.

The sequence is that of Late embryogenesis abundant protein 1 from Cicer arietinum (Chickpea).